A 294-amino-acid polypeptide reads, in one-letter code: Taste receptor type 2 member 143 (294 aa).

The Extracellular portion of the chain corresponds to 1–7 (MPSTPTL). A helical membrane pass occupies residues 8–28 (IFIVIFFLVSVASMLQNGFMI). Topologically, residues 29–43 (IVLGREWMRNRALPA) are cytoplasmic. Residues 44 to 64 (VDMIVASLASSRFCLHGIAIL) traverse the membrane as a helical segment. Over 65-80 (NNFLASFDFCYQANFV) the chain is Extracellular. The chain crosses the membrane as a helical span at residues 81-101 (GILWDFINTLILWLTAWLAIF). Topologically, residues 102–128 (YCVKISSFSHPVLFWLKWRISQLVPRL) are cytoplasmic. Residues 129–149 (LLVSLIMGGLSAIISATGNII) traverse the membrane as a helical segment. The Extracellular portion of the chain corresponds to 150 to 180 (ANQMIISQGFHGNCTFGHMSLDFYRYYYLSH). The N-linked (GlcNAc...) asparagine glycan is linked to asparagine 162. The helical transmembrane segment at 181-201 (AVLMWFTPFFLFLVSIIFLMF) threads the bilayer. Residues 202-227 (SLYRHVEKMRGHRPGPWDPRTQAHTM) lie on the Cytoplasmic side of the membrane. A helical membrane pass occupies residues 228-248 (ALKSLTVFITFYILFFLALII). Over 249–260 (SSTKSKTMHSYW) the chain is Extracellular. A helical membrane pass occupies residues 261-281 (YWVREIIIYTGIFLNSIILVL). Residues 282–294 (SNPKLRKALKMRF) lie on the Cytoplasmic side of the membrane.

Belongs to the G-protein coupled receptor T2R family.

It localises to the membrane. In terms of biological role, putative taste receptor which may play a role in the perception of bitterness. This chain is Taste receptor type 2 member 143, found in Rattus norvegicus (Rat).